The following is a 130-amino-acid chain: Phosphomevalonate dehydratase small subunit (130 aa).

Catalysis depends on Ser62, which acts as the Proton acceptor.

This sequence belongs to the AcnX type II small subunit family. As to quaternary structure, heterodimer composed of a large subunit (PMDh-L) and a small subunit (PMDh-S).

The enzyme catalyses (R)-5-phosphomevalonate = (2E)-3-methyl-5-phosphooxypent-2-enoate + H2O. It participates in isoprenoid biosynthesis; isopentenyl diphosphate biosynthesis via mevalonate pathway. Its function is as follows. Component of a hydro-lyase that catalyzes the dehydration of mevalonate 5-phosphate (MVA5P) to form trans-anhydromevalonate 5-phosphate (tAHMP). Involved in the archaeal mevalonate (MVA) pathway, which provides fundamental precursors for isoprenoid biosynthesis, such as isopentenyl diphosphate (IPP) and dimethylallyl diphosphate (DMAPP). This is Phosphomevalonate dehydratase small subunit from Thermococcus sibiricus (strain DSM 12597 / MM 739).